Consider the following 1101-residue polypeptide: Translation initiation factor IF-2 (1101 aa).

Disordered stretches follow at residues 81–437 (QEIL…EDDF) and 452–509 (SIST…QRAE). Positions 93 to 108 (PFSSTDAPVGSGQSSP) are enriched in polar residues. Residues 110 to 124 (IEPPRPPMKPQPPSP) are compositionally biased toward pro residues. 2 stretches are compositionally biased toward polar residues: residues 128–149 (EVTS…GSSS) and 157–184 (SPMS…QLKY). Residues 185-196 (NQEQSNQLEQES) show a composition bias toward low complexity. Polar residues predominate over residues 197 to 206 (AISSELSEVN). 3 stretches are compositionally biased toward basic and acidic residues: residues 228-237 (SKEKEAKSNE), 248-288 (KENK…DKKS), and 295-340 (VKRE…ELKR). The span at 361-378 (EPEDVEDTAEDLLEEDPL) shows a compositional bias: acidic residues. Basic residues-rich tracts occupy residues 385–397 (PKLK…KVGK) and 414–428 (KAGK…KRRQ). Positions 484–506 (EPGRGKSAERERSERKDRKEQPQ) are enriched in basic and acidic residues. A tr-type G domain is found at 592–765 (RRPPVVTIMG…LLVAEVGELS (174 aa)). The segment at 601 to 608 (GHVDHGKT) is G1. 601 to 608 (GHVDHGKT) is a binding site for GTP. The tract at residues 626 to 630 (GITQH) is G2. A G3 region spans residues 651 to 654 (DTPG). GTP is bound by residues 651–655 (DTPGH) and 705–708 (NKID). The tract at residues 705-708 (NKID) is G4. Positions 741 to 743 (SAL) are G5.

This sequence belongs to the TRAFAC class translation factor GTPase superfamily. Classic translation factor GTPase family. IF-2 subfamily.

The protein resides in the cytoplasm. Functionally, one of the essential components for the initiation of protein synthesis. Protects formylmethionyl-tRNA from spontaneous hydrolysis and promotes its binding to the 30S ribosomal subunits. Also involved in the hydrolysis of GTP during the formation of the 70S ribosomal complex. The sequence is that of Translation initiation factor IF-2 from Gloeothece citriformis (strain PCC 7424) (Cyanothece sp. (strain PCC 7424)).